Consider the following 309-residue polypeptide: Mannitol-1-phosphatase (309 aa).

Histidine 82 functions as the Tele-phosphohistidine intermediate in the catalytic mechanism. Catalysis depends on glutamate 166, which acts as the Proton donor/acceptor.

The protein belongs to the phosphoglycerate mutase family.

It carries out the reaction D-mannitol 1-phosphate + H2O = D-mannitol + phosphate. Its activity is regulated as follows. By diethyl pyrocarbonate (DEPC). In terms of biological role, key enzyme for mannitol biosynthesis. This is Mannitol-1-phosphatase from Eimeria tenella (Coccidian parasite).